Consider the following 205-residue polypeptide: Probable GTP-binding protein EngB (205 aa).

The 175-residue stretch at asparagine 25–lysine 199 folds into the EngB-type G domain. Residues glycine 33 to serine 40, glycine 60 to leucine 64, aspartate 78 to glycine 81, threonine 145 to aspartate 148, and phenylalanine 178 to serine 180 contribute to the GTP site. The Mg(2+) site is built by serine 40 and threonine 62.

It belongs to the TRAFAC class TrmE-Era-EngA-EngB-Septin-like GTPase superfamily. EngB GTPase family. Requires Mg(2+) as cofactor.

In terms of biological role, necessary for normal cell division and for the maintenance of normal septation. The sequence is that of Probable GTP-binding protein EngB from Buchnera aphidicola subsp. Acyrthosiphon pisum (strain 5A).